A 653-amino-acid chain; its full sequence is DNA ligase (653 aa).

Residues Asn32 to Asp36 and Ser80 to Leu81 contribute to the NAD(+) site. The active-site N6-AMP-lysine intermediate is the Lys104. Arg125, Glu159, and Lys297 together coordinate NAD(+). 4 residues coordinate Zn(2+): Cys386, Cys389, Cys406, and Cys411. The region spanning Gly571–Ala653 is the BRCT domain.

The protein belongs to the NAD-dependent DNA ligase family. LigA subfamily. The cofactor is Mg(2+). Mn(2+) is required as a cofactor.

The enzyme catalyses NAD(+) + (deoxyribonucleotide)n-3'-hydroxyl + 5'-phospho-(deoxyribonucleotide)m = (deoxyribonucleotide)n+m + AMP + beta-nicotinamide D-nucleotide.. In terms of biological role, DNA ligase that catalyzes the formation of phosphodiester linkages between 5'-phosphoryl and 3'-hydroxyl groups in double-stranded DNA using NAD as a coenzyme and as the energy source for the reaction. It is essential for DNA replication and repair of damaged DNA. The chain is DNA ligase from Lachnoclostridium phytofermentans (strain ATCC 700394 / DSM 18823 / ISDg) (Clostridium phytofermentans).